Here is a 366-residue protein sequence, read N- to C-terminus: Alanine racemase (366 aa).

Lys40 acts as the Proton acceptor; specific for D-alanine in catalysis. N6-(pyridoxal phosphate)lysine is present on Lys40. A substrate-binding site is contributed by Arg136. Residue Tyr263 is the Proton acceptor; specific for L-alanine of the active site. Substrate is bound at residue Met310.

It belongs to the alanine racemase family. Pyridoxal 5'-phosphate is required as a cofactor.

It carries out the reaction L-alanine = D-alanine. It functions in the pathway amino-acid biosynthesis; D-alanine biosynthesis; D-alanine from L-alanine: step 1/1. Catalyzes the interconversion of L-alanine and D-alanine. May also act on other amino acids. This Streptococcus pyogenes serotype M5 (strain Manfredo) protein is Alanine racemase (alr).